The sequence spans 390 residues: Elongation factor Tu 2 (390 aa).

The tr-type G domain maps to 10-201; that stretch reads KPHVNVGTIG…LDDYVEVPPR (192 aa). A G1 region spans residues 19–26; sequence GHVDHGKT. 19 to 26 provides a ligand contact to GTP; sequence GHVDHGKT. Thr26 provides a ligand contact to Mg(2+). The interval 55 to 59 is G2; it reads GITIA. Residues 76–79 are G3; that stretch reads DCPG. GTP is bound by residues 76–80 and 131–134; these read DCPGH and NKAD. Positions 131 to 134 are G4; it reads NKAD. Residues 168-170 are G5; sequence SAL.

This sequence belongs to the TRAFAC class translation factor GTPase superfamily. Classic translation factor GTPase family. EF-Tu/EF-1A subfamily. Monomer.

The protein resides in the cytoplasm. It carries out the reaction GTP + H2O = GDP + phosphate + H(+). Its function is as follows. GTP hydrolase that promotes the GTP-dependent binding of aminoacyl-tRNA to the A-site of ribosomes during protein biosynthesis. The chain is Elongation factor Tu 2 from Wolbachia sp. subsp. Brugia malayi (strain TRS).